A 505-amino-acid polypeptide reads, in one-letter code: Prenylcysteine oxidase 1 (505 aa).

A signal peptide spans 1 to 27 (MGRVVAELVSSLLGLWLLLCSCGCPEG). N-linked (GlcNAc...) asparagine glycans are attached at residues Asn196, Asn323, and Asn353.

The protein belongs to the prenylcysteine oxidase family. FAD is required as a cofactor.

The protein resides in the lysosome. The enzyme catalyses an S-polyprenyl-L-cysteine + O2 + H2O = a polyprenal + L-cysteine + H2O2. It catalyses the reaction S-(2E,6E)-farnesyl-L-cysteine + O2 + H2O = (2E,6E)-farnesal + L-cysteine + H2O2. It carries out the reaction [(2E,6E,10E)-geranylgeranyl]-L-cysteine + O2 + H2O = (2E,6E,10E)-geranylgeranial + L-cysteine + H2O2. Functionally, prenylcysteine oxidase that cleaves the thioether bond of prenyl-L-cysteines, such as farnesylcysteine and geranylgeranylcysteine. Only active against free prenylcysteines and not prenylcysteine residues within prenylated proteins or peptides. Involved in the final step in the degradation of prenylated proteins, by degrading prenylcysteines after the protein has been degraded. This is Prenylcysteine oxidase 1 from Pongo abelii (Sumatran orangutan).